We begin with the raw amino-acid sequence, 495 residues long: Protein SLENDER RICE1-LIKE 1 (495 aa).

Positions 77–449 (EEEEVAGIRL…RPLFSASAWE (373 aa)) constitute a GRAS domain. Residues 84 to 140 (IRLVHLLMSCAGAIEAGDHALASAQLADSHAALAAVSAASGIGRVAVHFTTALSRRL) form a leucine repeat I (LRI) region. The interval 158 to 223 (YHHFYEACPY…GGPPFLRITG (66 aa)) is VHIID. The short motif at 189–193 (VHVID) is the VHIID element. The leucine repeat II (LRII) stretch occupies residues 237 to 269 (DVGLRLADLARSVRVRFSFRGVAANSLDEVRPW). Residues 279–371 (VAFNSVLQLH…EAYLQREICD (93 aa)) are PFYRE. Positions 287–291 (LHRLL) match the LXXLL motif motif. Residues 374–449 (CGEGAARRER…RPLFSASAWE (76 aa)) form an SAW region. The disordered stretch occupies residues 451 to 495 (AGDGGGDNNNNSNSNVSGSSGSDSNNSGSSNGKSSGARDGSSVCL). A compositionally biased stretch (low complexity) spans 458 to 485 (NNNNSNSNVSGSSGSDSNNSGSSNGKSS).

Belongs to the GRAS family. Expressed in elongating internodes and flowers. Expressed in floral meristem, stamen primordia and tapetum in developing anthers. Expressed at low levels in roots, shoot apices and rachis.

The protein resides in the nucleus. In terms of biological role, probable transcriptional regulator that acts as a repressor of the gibberellin (GA) signaling pathway. Its repressive activity is weaker than that of SLR1. Its overexpression prevents the GA signaling pathway and induces a dwarf phenotype. This Oryza sativa subsp. japonica (Rice) protein is Protein SLENDER RICE1-LIKE 1.